A 208-amino-acid polypeptide reads, in one-letter code: Cytochrome c oxidase assembly protein CtaG (208 aa).

The Cytoplasmic segment spans residues 1–19 (MPDTQPNVSPNPIRRRGLG). The chain crosses the membrane as a helical; Signal-anchor for type II membrane protein span at residues 20 to 42 (RDATVASICGLVVALMVGASFAA). Residues 43-208 (VPFYNWFCRT…TAPDKRKGNL (166 aa)) are Periplasmic-facing.

It belongs to the COX11/CtaG family.

The protein localises to the cell inner membrane. Its function is as follows. Exerts its effect at some terminal stage of cytochrome c oxidase synthesis, probably by being involved in the insertion of the copper B into subunit I. The protein is Cytochrome c oxidase assembly protein CtaG of Rhodopseudomonas palustris (strain HaA2).